Here is a 234-residue protein sequence, read N- to C-terminus: ASKTCPSNTPLSCHNTTVVQDTCCFIPSGQLLQTQFWDTDPSTGPSDSWTIHGLWPDNCDGSFPQTCDASRAYTNITDILTAMGADDTLQYMQTYWKDYQGNDESFWEHEWGKHGTCITTLDPGCYDDYVPTEEAADFFSKTVSLFKTLPTYQWLADAGITPDGSKSYALDDIQSALSQQHGAEVTLGCDGKTLNEVWYHFNVKGSLQDGQFVAAEPDGAKSTCPDDVYYDPKK.

Cystine bridges form between cysteine 5-cysteine 24, cysteine 13-cysteine 59, cysteine 23-cysteine 125, cysteine 67-cysteine 117, and cysteine 189-cysteine 224. Asparagine 15 carries N-linked (GlcNAc...) asparagine glycosylation. Histidine 52 is an active-site residue. A glycan (N-linked (GlcNAc...) asparagine) is linked at asparagine 75. Active-site residues include glutamate 110 and histidine 114.

It belongs to the RNase T2 family.

The catalysed reaction is a ribonucleotidyl-ribonucleotide-RNA + H2O = a 3'-end 3'-phospho-ribonucleotide-RNA + a 5'-end dephospho-ribonucleoside-RNA + H(+). In terms of biological role, this is a base non-specific and adenylic acid preferential ribonuclease. The sequence is that of Ribonuclease Trv from Hypocrea rufa (Trichoderma viride).